We begin with the raw amino-acid sequence, 89 residues long: Large ribosomal subunit protein eL34 (89 aa).

Residues 45–71 (GIPRGRPVEMRKLPKTKKRPERPMPHL) form a disordered region.

The protein belongs to the eukaryotic ribosomal protein eL34 family. Part of the 50S ribosomal subunit.

The polypeptide is Large ribosomal subunit protein eL34 (Pyrococcus furiosus (strain ATCC 43587 / DSM 3638 / JCM 8422 / Vc1)).